Reading from the N-terminus, the 374-residue chain is Translocating chain-associated membrane protein 1 (374 aa).

The Cytoplasmic segment spans residues 1–29 (MAIRKKSTKSPPVLSHEFVLQNHADIVSC). The chain crosses the membrane as a helical span at residues 30 to 50 (VAMVFLLGLMFEITAKASIIF). The Lumenal portion of the chain corresponds to 51–76 (VTLQYNVTLPATEEQATESVSLYYYG). Residue N56 is glycosylated (N-linked (GlcNAc...) asparagine). A helical membrane pass occupies residues 77-97 (IKDLATVFFYMLVAIIIHAVI). The Cytoplasmic portion of the chain corresponds to 98 to 121 (QEYMLDKINRRMHFSKTKHSKFNE). Positions 117–326 (SKFNESGQLS…NFQLRRWREH (210 aa)) constitute a TLC domain. Residues 122-142 (SGQLSAFYLFACVWGTFILIS) traverse the membrane as a helical segment. The Lumenal portion of the chain corresponds to 143-159 (ENYISDPTILWRAYPHN). Residues 160–180 (LMTFQMKFFYISQLAYWLHAF) traverse the membrane as a helical segment. At 181 to 192 (PELYFQKTKKED) the chain is on the cytoplasmic side. Residues 193–213 (IPRQLVYIGLYLFHIAGAYLL) traverse the membrane as a helical segment. Residues 214-217 (NLNH) are Lumenal-facing. The chain crosses the membrane as a helical span at residues 218 to 238 (LGLVLLVLHYFVEFLFHISRL). Residues 239 to 251 (FYFSNEKYQKGFS) lie on the Cytoplasmic side of the membrane. The chain crosses the membrane as a helical span at residues 252–272 (LWAVLFVLGRLLTLILSVLTV). At 273 to 297 (GFGLARAENQKLDFSTGNFNVLAVR) the chain is on the lumenal side. The chain crosses the membrane as a helical span at residues 298–318 (IAVLASICVTQAFMMWKFINF). Topologically, residues 319–374 (QLRRWREHSAFQAPAVKKKPTVTKGRSSKKGTENGVNGTLTSNVADSPRNKKEKSS) are cytoplasmic. Basic residues predominate over residues 334 to 347 (VKKKPTVTKGRSSK). The interval 334–374 (VKKKPTVTKGRSSKKGTENGVNGTLTSNVADSPRNKKEKSS) is disordered. The segment covering 352–363 (NGVNGTLTSNVA) has biased composition (polar residues). A Phosphoserine modification is found at S365.

Belongs to the TRAM family. In terms of assembly, interacts with SEC61B. May interact with Derlin-1/DERL1. As to quaternary structure, (Microbial infection) Interacts with human cytomegalovirus/HHV-5 proteins US2 and US11. In terms of processing, N-glycosylated.

It localises to the endoplasmic reticulum membrane. Its function is as follows. Involved in the translocation of nascent protein chains into or through the endoplasmic reticulum (ER) membrane by facilitating the proper chain positioning at the SEC61 channel. Regulates the exposure of nascent secretory protein chain to the cytosol during translocation into the ER. May affect the phospholipid bilayer in the vicinity of the lateral gate of the SEC61 channel, thereby facilitating ER protein transport. Intimately associates with transmembrane (TM) domain of nascent membrane proteins during the entire integration process into the ER membrane. Associates with the second TM domain of G-protein-coupled receptor opsin/OPSD nascent chain in the ER membrane, which may facilitate its integration into the membrane. Under conditions of ER stress, participates in the disposal of misfolded ER membrane proteins during the unfolded protein response (UPR), an integrated stress response (ISR) pathway, by selectively retrotranslocating misfolded ER-membrane proteins from the ER into the cytosol where they are ubiquitinated and degraded by the proteasome. In terms of biological role, (Microbial infection) In case of cytomegalovirus infection, participates in US2- and US11-mediated ER-to-cytosol retrotranslocation and subsequent degradation of major histocompatibility complex (MHC) class I heavy chains, thereby decreasing the immune detection by cytotoxic T-cells. This Homo sapiens (Human) protein is Translocating chain-associated membrane protein 1.